Reading from the N-terminus, the 649-residue chain is Threonine--tRNA ligase (649 aa).

A TGS domain is found at 1 to 61 (MIKITFPDGA…TQDGSIEIVT (61 aa)). Residues 242–540 (DHRKLGKELD…LIETYKGAFP (299 aa)) are catalytic. Zn(2+) is bound by residues Cys336, His387, and His517.

The protein belongs to the class-II aminoacyl-tRNA synthetase family. Homodimer. It depends on Zn(2+) as a cofactor.

The protein resides in the cytoplasm. It catalyses the reaction tRNA(Thr) + L-threonine + ATP = L-threonyl-tRNA(Thr) + AMP + diphosphate + H(+). Its function is as follows. Catalyzes the attachment of threonine to tRNA(Thr) in a two-step reaction: L-threonine is first activated by ATP to form Thr-AMP and then transferred to the acceptor end of tRNA(Thr). Also edits incorrectly charged L-seryl-tRNA(Thr). In Streptococcus mutans serotype c (strain ATCC 700610 / UA159), this protein is Threonine--tRNA ligase.